The following is an 83-amino-acid chain: GGGARSGDDVVAKYCNACHGTGLLNAPKVGDSAAWKTRADAKGGLDGLLAQSLSGLNAMPPKGTCADCSDDELKAAIGKMSGL.

Residues Cys15, Cys18, His19, and Met59 each coordinate heme c. Cys65 and Cys68 are disulfide-bonded.

Belongs to the cytochrome c family. As to quaternary structure, homodimer. Binds 1 heme c group covalently per subunit.

Its function is as follows. It is unreactive with cytochrome c reductase or oxidase. The chain is Cytochrome c5 from Azotobacter vinelandii.